We begin with the raw amino-acid sequence, 338 residues long: Anthranilate phosphoribosyltransferase (338 aa).

Residues glycine 81, 84 to 85 (GD), threonine 89, 91 to 94 (NIST), 109 to 117 (KHGNRAVSS), and serine 121 each bind 5-phospho-alpha-D-ribose 1-diphosphate. Glycine 81 is an anthranilate binding site. A Mg(2+)-binding site is contributed by serine 93. Asparagine 112 serves as a coordination point for anthranilate. Residue arginine 167 coordinates anthranilate. Mg(2+)-binding residues include aspartate 226 and glutamate 227.

The protein belongs to the anthranilate phosphoribosyltransferase family. In terms of assembly, homodimer. Mg(2+) is required as a cofactor.

It carries out the reaction N-(5-phospho-beta-D-ribosyl)anthranilate + diphosphate = 5-phospho-alpha-D-ribose 1-diphosphate + anthranilate. It participates in amino-acid biosynthesis; L-tryptophan biosynthesis; L-tryptophan from chorismate: step 2/5. Catalyzes the transfer of the phosphoribosyl group of 5-phosphorylribose-1-pyrophosphate (PRPP) to anthranilate to yield N-(5'-phosphoribosyl)-anthranilate (PRA). This chain is Anthranilate phosphoribosyltransferase, found in Myxococcus xanthus (strain DK1622).